The chain runs to 148 residues: UPF0178 protein BH16190 (148 aa).

This sequence belongs to the UPF0178 family.

This is UPF0178 protein BH16190 from Bartonella henselae (strain ATCC 49882 / DSM 28221 / CCUG 30454 / Houston 1) (Rochalimaea henselae).